A 388-amino-acid polypeptide reads, in one-letter code: Putative membrane protein MJ1562 (388 aa).

6 helical membrane passes run 22 to 42 (FLML…ATNV), 219 to 239 (SQSF…IIYF), 246 to 266 (IMPL…MGLL), 273 to 293 (ATAG…IHLM), 320 to 340 (AVMA…LAPL), and 351 to 371 (ALGI…LIVI).

This sequence belongs to the resistance-nodulation-cell division (RND) (TC 2.A.6) family. MmpL subfamily.

It localises to the cell membrane. This chain is Putative membrane protein MJ1562, found in Methanocaldococcus jannaschii (strain ATCC 43067 / DSM 2661 / JAL-1 / JCM 10045 / NBRC 100440) (Methanococcus jannaschii).